The sequence spans 37 residues: Photosystem II reaction center protein K (37 aa).

Residues 1 to 15 (KLPEAYAIFDPLVDV) are Lumenal-facing. The chain crosses the membrane as a helical span at residues 16–30 (LPVIPVLFFALAFVV). Residues 31-37 (QAAVGFR) lie on the Cytoplasmic side of the membrane.

This sequence belongs to the PsbK family. As to quaternary structure, PSII is composed of 1 copy each of membrane proteins PsbA, PsbB, PsbC, PsbD, PsbE, PsbF, PsbH, PsbI, PsbJ, PsbK, PsbL, PsbM, PsbT, PsbX, PsbY, PsbZ, Psb30/Ycf12, peripheral proteins PsbO, CyanoQ (PsbQ), PsbU, PsbV and a large number of cofactors. It forms dimeric complexes. PSII binds multiple chlorophylls, carotenoids and specific lipids. is required as a cofactor.

The protein resides in the cellular thylakoid membrane. Functionally, one of the components of the core complex of photosystem II (PSII). PSII is a light-driven water:plastoquinone oxidoreductase that uses light energy to abstract electrons from H(2)O, generating O(2) and a proton gradient subsequently used for ATP formation. It consists of a core antenna complex that captures photons, and an electron transfer chain that converts photonic excitation into a charge separation. The protein is Photosystem II reaction center protein K of Thermostichus vulcanus (Synechococcus vulcanus).